Consider the following 35-residue polypeptide: Probable endonuclease 4 (35 aa).

E15 contributes to the Zn(2+) binding site.

It belongs to the AP endonuclease 2 family. Zn(2+) is required as a cofactor.

The catalysed reaction is Endonucleolytic cleavage to 5'-phosphooligonucleotide end-products.. Its function is as follows. Endonuclease IV plays a role in DNA repair. It cleaves phosphodiester bonds at apurinic or apyrimidinic (AP) sites, generating a 3'-hydroxyl group and a 5'-terminal sugar phosphate. The protein is Probable endonuclease 4 (nfo) of Yersinia enterocolitica.